The primary structure comprises 298 residues: Protease HtpX homolog (298 aa).

Transmembrane regions (helical) follow at residues 15–35 and 39–59; these read YVMIGFAILVLFIGAAVGYVF and AMAGIIMAAVIAAIYMAMMIA. Residue His-143 coordinates Zn(2+). Residue Glu-144 is part of the active site. His-147 contacts Zn(2+). Helical transmembrane passes span 158 to 178 and 197 to 217; these read IALALSSAIAMLVNIGMRSFW and IVMMIISIVLVILGPIATTIA. Glu-226 serves as a coordination point for Zn(2+).

The protein belongs to the peptidase M48B family. Requires Zn(2+) as cofactor.

The protein resides in the cell membrane. This is Protease HtpX homolog from Pediococcus pentosaceus (strain ATCC 25745 / CCUG 21536 / LMG 10740 / 183-1w).